The chain runs to 445 residues: Argininosuccinate synthase (445 aa).

ATP-binding positions include 17-25 (AFSGGLDTS) and A43. Position 99 (Y99) interacts with L-citrulline. ATP is bound by residues G129 and T131. L-aspartate contacts are provided by T131, N135, and D136. N135 is a binding site for L-citrulline. D136 contributes to the ATP binding site. Positions 139 and 192 each coordinate L-citrulline. D194 contributes to the ATP binding site. Residues T201, E203, and E280 each contribute to the L-citrulline site.

This sequence belongs to the argininosuccinate synthase family. Type 2 subfamily. As to quaternary structure, homotetramer.

It is found in the cytoplasm. The catalysed reaction is L-citrulline + L-aspartate + ATP = 2-(N(omega)-L-arginino)succinate + AMP + diphosphate + H(+). It participates in amino-acid biosynthesis; L-arginine biosynthesis; L-arginine from L-ornithine and carbamoyl phosphate: step 2/3. This Afipia carboxidovorans (strain ATCC 49405 / DSM 1227 / KCTC 32145 / OM5) (Oligotropha carboxidovorans) protein is Argininosuccinate synthase.